The chain runs to 247 residues: CDP-diacylglycerol pyrophosphatase (247 aa).

A helical membrane pass occupies residues 5–22 (IVLALVVSVAVAGGWLWM).

This sequence belongs to the Cdh family.

The protein localises to the cell inner membrane. It catalyses the reaction a CDP-1,2-diacyl-sn-glycerol + H2O = a 1,2-diacyl-sn-glycero-3-phosphate + CMP + 2 H(+). It functions in the pathway phospholipid metabolism; CDP-diacylglycerol degradation; phosphatidate from CDP-diacylglycerol: step 1/1. The polypeptide is CDP-diacylglycerol pyrophosphatase (Enterobacter sp. (strain 638)).